Consider the following 240-residue polypeptide: MADIRITGRMVNFSRITFDTNDHDVIRQQLSNILNEGSYQGTVVIIDSTVEQELIALIQLLVSLGLQPMAVIDGILGDEARAIQFPVLPADQPLQRIKPTAEQVAIVEKPSSAQASVETKKPLNNNAVAHITSYHDEILRTGQSLVQDQGDIILKAAMNSGSEVIASGNIHIYGTVRGRVIAGAGGHAAARIFCQSLEAELVSIAGTYCVADDIPKHVVKKPVHIYLNEKQELEFEALEL.

It belongs to the MinC family. As to quaternary structure, interacts with MinD and FtsZ.

In terms of biological role, cell division inhibitor that blocks the formation of polar Z ring septums. Rapidly oscillates between the poles of the cell to destabilize FtsZ filaments that have formed before they mature into polar Z rings. Prevents FtsZ polymerization. The polypeptide is Probable septum site-determining protein MinC (Acinetobacter baumannii (strain AYE)).